A 1195-amino-acid polypeptide reads, in one-letter code: Protein PIP82 (1195 aa).

Over residues 1–10 (MSHQEQQFQH) the composition is skewed to low complexity. 9 disordered regions span residues 1 to 55 (MSHQ…IGSS), 85 to 132 (KLRG…SQQF), 291 to 471 (NTFD…TANL), 493 to 515 (KVAK…GASG), 544 to 567 (QRNA…GHEP), 613 to 637 (EEDN…GIAT), 702 to 771 (MSPV…IVPK), 833 to 977 (SAGS…VKTS), and 1060 to 1195 (QITV…VVEI). Residues 11 to 26 (YPHHQHHHHHHHHHIH) show a composition bias toward basic residues. Residues 37–50 (RSSDLEPNRSRNTD) are compositionally biased toward basic and acidic residues. Positions 109–118 (GSAKDGAGAA) are enriched in low complexity. Residues 119 to 132 (QQTHLQVAGQSQQF) show a composition bias toward polar residues. Over residues 300–313 (HEQFERGKISHETD) the composition is skewed to basic and acidic residues. A compositionally biased stretch (low complexity) spans 351-360 (QQAAAEESPQ). Positions 361–371 (ANPPPPPPPRP) are enriched in pro residues. Positions 400–450 (ETTKTAENADENNASRKLSIRQNIKRLRKSIKRPSKIKSKAAAPVPDSDEE) are phospho-regulated basic and hydrophobic (PRBH) motif. Positions 422-438 (NIKRLRKSIKRPSKIKS) are enriched in basic residues. Positions 494-505 (VAKEPEELETKA) are enriched in basic and acidic residues. Over residues 545–560 (RNANNQNATTSKQPKP) the composition is skewed to polar residues. 2 stretches are compositionally biased toward polar residues: residues 732-742 (SGPQKSMSYSP) and 856-867 (RVQSPQIGNSRE). Acidic residues predominate over residues 872–891 (QEEEDKEAERDSEEEEEERD). Pro residues-rich tracts occupy residues 898-910 (SESP…PQRR) and 925-939 (VPPP…PPPS). Residues 940 to 968 (VETIPSVASLPSPAPVTRSMAQRSASMSR) are compositionally biased toward low complexity. The span at 1075–1085 (QSDQSDQSAHQ) shows a compositional bias: polar residues. Positions 1086 to 1095 (EITDTRKTKS) are enriched in basic and acidic residues. The segment covering 1102 to 1111 (RQNSNCSRSE) has biased composition (polar residues). Composition is skewed to low complexity over residues 1114–1149 (SPLS…QNPS) and 1179–1195 (SYYS…VVEI).

Post-translationally, phosphorylated by aPKC which lowers lipid affinity and promotes dissociation from the cell cortex. In the photoreceptor cells, aPKC-mediated phosphorylation leads to its displacement from the stalk apical cortex and thus restricts its localization to the rhabdomeric apical cortex where it functions. Dephosphorylation appears to be light-dependent. As to expression, restricted to photoreceptor cells (at protein level). Not detected until approximately 48hrs after puparium formation (APF) and then maintained in the photoreceptor cells post-eclosion (at protein level).

The protein resides in the cytoplasm. The protein localises to the cell cortex. It localises to the cytosol. It is found in the cell projection. Its subcellular location is the rhabdomere. Required for the morphological differentiation and maintenance of the rhabdomeric photoreceptor apical domain. Acts as a downstream component of the gl and Pph13 transcriptional pathway which is required for photoreceptor cell development. Likely to function by regulating the trafficking or retention of rhabdomeric proteins including the phototransduction proteins ninaE and didum. This Drosophila melanogaster (Fruit fly) protein is Protein PIP82.